The chain runs to 244 residues: MSTSKRKRGDDANWSKRVTKKKPSSAGLKRAGSKADRPSLQIQTLQHAGTTMITVPSGGVCDLINTYARGSDEGNRHTSETLTYKIAVDYHFVADAAACPYSNTGTGVMWLVYDTTPGGQAPTPQTIFAYPDTLKAWPATWKVSRELCHRFVVKRRWLFNMETDGRIGSDIPPSNASWKPCKRNIYFHKFTSGLGVRTQWKNVTDGGVGAIQRGALYMVIAPGNGLTFTAHGQTRLYFKSVGNQ.

Residues 1–24 (MSTSKRKRGDDANWSKRVTKKKPS) carry the Bipartite nuclear localization signal motif. Residues 1–39 (MSTSKRKRGDDANWSKRVTKKKPSSAGLKRAGSKADRPS) form a disordered region.

The protein belongs to the geminiviridae capsid protein family. Homomultimer. Interacts with the movement protein. Binds to single-stranded and double-stranded viral DNA.

It is found in the virion. The protein localises to the host nucleus. Functionally, encapsidates the viral genome into characteristic twinned ('geminate') particles. Binds the genomic viral ssDNA and shuttles it into and out of the cell nucleus. Plays a role in protection of the genome from degradation, virus acquisition and transmission by insect vectors, infectivity, and systemic movement. The CP of monopartite geminiviruses is absolutely essential for virus movement. The protein is Capsid protein of Maize streak virus genotype A (isolate Kenya) (MSV).